The sequence spans 39 residues: Phospholipase A2 (39 aa).

Ca(2+) contacts are provided by Trp-10, Gly-12, and Gly-14. Cysteines 11 and 33 form a disulfide. His-36 is a catalytic residue. Asp-37 contributes to the Ca(2+) binding site.

It depends on Ca(2+) as a cofactor. In terms of tissue distribution, expressed uniformly in tentacles (at protein level).

The protein resides in the secreted. Its subcellular location is the nematocyst. It carries out the reaction a 1,2-diacyl-sn-glycero-3-phosphocholine + H2O = a 1-acyl-sn-glycero-3-phosphocholine + a fatty acid + H(+). With respect to regulation, inhibited by morin and p-BPB. PA2 catalyzes the calcium-dependent hydrolysis of the 2-acyl groups in 3-sn-phosphoglycerides. Induces insulin secretion in isolated rat islets under high glucose concentration conditions, but not under low glucose concentration conditions. Increases perfusion pressure, renal vascular resistance, urinary flow, glomerular filtration rate, and potassium, sodium, and chloride excretion levels in rat kidney. Does not increase perfusion pressure in the rat mesenteric vascular bed. The polypeptide is Phospholipase A2 (Bunodosoma caissarum (Sea anemone)).